A 249-amino-acid polypeptide reads, in one-letter code: 3-deoxy-manno-octulosonate cytidylyltransferase (249 aa).

Belongs to the KdsB family.

The protein localises to the cytoplasm. It carries out the reaction 3-deoxy-alpha-D-manno-oct-2-ulosonate + CTP = CMP-3-deoxy-beta-D-manno-octulosonate + diphosphate. The protein operates within nucleotide-sugar biosynthesis; CMP-3-deoxy-D-manno-octulosonate biosynthesis; CMP-3-deoxy-D-manno-octulosonate from 3-deoxy-D-manno-octulosonate and CTP: step 1/1. It participates in bacterial outer membrane biogenesis; lipopolysaccharide biosynthesis. Activates KDO (a required 8-carbon sugar) for incorporation into bacterial lipopolysaccharide in Gram-negative bacteria. The chain is 3-deoxy-manno-octulosonate cytidylyltransferase from Aliivibrio salmonicida (strain LFI1238) (Vibrio salmonicida (strain LFI1238)).